A 515-amino-acid polypeptide reads, in one-letter code: Aldehyde dehydrogenase tropH (515 aa).

238 to 243 (GSVATG) provides a ligand contact to NAD(+). Glu-260 serves as the catalytic Proton acceptor. Residue Cys-295 is the Nucleophile of the active site.

Belongs to the aldehyde dehydrogenase family.

It catalyses the reaction an aldehyde + NAD(+) + H2O = a carboxylate + NADH + 2 H(+). It functions in the pathway secondary metabolite biosynthesis. Aldehyde dehydrogenase; part of the gene cluster that mediates the biosynthesis of the tropolone class of fungal maleic anhydrides. The pathway begins with the synthesis of 3-methylorcinaldehyde by the non-reducing polyketide synthase (PKS) tropA. 3-methylorcinaldehyde is the substrate for the FAD-dependent monooxygenase tropB to yield a dearomatized hydroxycyclohexadione. The 2-oxoglutarate-dependent dioxygenase tropC then performs the oxidative ring expansion to provide the first tropolone metabolite stipitaldehyde. Trop D converts stipitaldehyde into stipitacetal which is in turn converted to stipitalide by the short-chain dehydrogenase/reductase tropE. The next steps involve tropF, tropG, tropH, tropI and tropJ to form successive tropolone maleic anhydrides including stipitaldehydic, stipitatonic and stipitatic acids. In Talaromyces stipitatus (strain ATCC 10500 / CBS 375.48 / QM 6759 / NRRL 1006) (Penicillium stipitatum), this protein is Aldehyde dehydrogenase tropH.